The sequence spans 376 residues: Probable plastid-lipid-associated protein 3, chloroplastic (376 aa).

The transit peptide at 1–53 (MATLFTVARPSSLLYVSSINPSKTFSPSISLKLNSLSFSFGYRPKPLRFSKIR) directs the protein to the chloroplast. The disordered stretch occupies residues 54–146 (SSLPSESESE…EADAGNGSAV (93 aa)). Positions 85 to 96 (PDSQPDNVTVNV) are enriched in polar residues. The span at 117 to 126 (MESDPPRNED) shows a compositional bias: basic and acidic residues.

It belongs to the PAP/fibrillin family.

It localises to the plastid. The protein localises to the chloroplast. The protein resides in the plastoglobule. Probably involved in light/cold stress-related jasmonate (JA) biosynthesis. The polypeptide is Probable plastid-lipid-associated protein 3, chloroplastic (PAP3) (Arabidopsis thaliana (Mouse-ear cress)).